A 527-amino-acid polypeptide reads, in one-letter code: GMP synthase [glutamine-hydrolyzing] (527 aa).

Residues 13–202 (TILVLDFGSQ…AVDICGAAQK (190 aa)) form the Glutamine amidotransferase type-1 domain. Cys-89 serves as the catalytic Nucleophile. Catalysis depends on residues His-176 and Glu-178. Positions 203-402 (WSMENFVDTE…MGIPHDLVWR (200 aa)) constitute a GMPS ATP-PPase domain. 231–237 (SGGVDST) provides a ligand contact to ATP. XMP contacts are provided by Arg-304, Asp-464, Lys-519, and Glu-525.

Homodimer. Requires Mg(2+) as cofactor.

It is found in the cytoplasm. Its subcellular location is the cytosol. The enzyme catalyses XMP + L-glutamine + ATP + H2O = GMP + L-glutamate + AMP + diphosphate + 2 H(+). It functions in the pathway purine metabolism; GMP biosynthesis; GMP from XMP (L-Gln route): step 1/1. Its function is as follows. Catalyzes the conversion of xanthine monophosphate (XMP) to GMP in the presence of glutamine and ATP through an adenyl-XMP intermediate. This chain is GMP synthase [glutamine-hydrolyzing] (GUA1), found in Yarrowia lipolytica (strain CLIB 122 / E 150) (Yeast).